The sequence spans 536 residues: CTP synthase (536 aa).

The interval 1–267 (MSKFVFVTGG…CKQTLNCLEL (267 aa)) is amidoligase domain. A CTP-binding site is contributed by serine 13. UTP is bound at residue serine 13. Residues 14–19 (SIGKGI) and aspartate 71 contribute to the ATP site. Aspartate 71 and glutamate 141 together coordinate Mg(2+). Residues 148-150 (DIE), 188-193 (KTKPTQ), and lysine 224 contribute to the CTP site. UTP is bound by residues 188–193 (KTKPTQ) and lysine 224. The 243-residue stretch at 292 to 534 (KVALVGKYIE…IKASQEKLEQ (243 aa)) folds into the Glutamine amidotransferase type-1 domain. An L-glutamine-binding site is contributed by glycine 354. The Nucleophile; for glutamine hydrolysis role is filled by cysteine 381. Residues 382–385 (LGMQ), glutamate 405, and arginine 462 contribute to the L-glutamine site. Catalysis depends on residues histidine 507 and glutamate 509.

This sequence belongs to the CTP synthase family. Homotetramer.

It catalyses the reaction UTP + L-glutamine + ATP + H2O = CTP + L-glutamate + ADP + phosphate + 2 H(+). The enzyme catalyses L-glutamine + H2O = L-glutamate + NH4(+). The catalysed reaction is UTP + NH4(+) + ATP = CTP + ADP + phosphate + 2 H(+). It participates in pyrimidine metabolism; CTP biosynthesis via de novo pathway; CTP from UDP: step 2/2. With respect to regulation, allosterically activated by GTP, when glutamine is the substrate; GTP has no effect on the reaction when ammonia is the substrate. The allosteric effector GTP functions by stabilizing the protein conformation that binds the tetrahedral intermediate(s) formed during glutamine hydrolysis. Inhibited by the product CTP, via allosteric rather than competitive inhibition. Catalyzes the ATP-dependent amination of UTP to CTP with either L-glutamine or ammonia as the source of nitrogen. Regulates intracellular CTP levels through interactions with the four ribonucleotide triphosphates. In Prochlorococcus marinus subsp. pastoris (strain CCMP1986 / NIES-2087 / MED4), this protein is CTP synthase.